Here is a 21-residue protein sequence, read N- to C-terminus: Fibrinogen beta chain (21 aa).

Q1 bears the Pyrrolidone carboxylic acid mark. Over residues 1-11 (QHSTDYDEEEE) the composition is skewed to acidic residues. The tract at residues 1-21 (QHSTDYDEEEEDRAKLHLDAR) is disordered. T4 carries an O-linked (GalNAc...) threonine glycan. Y6 is modified (sulfotyrosine). The segment covering 12–21 (DRAKLHLDAR) has biased composition (basic and acidic residues).

Heterohexamer; disulfide linked. Contains 2 sets of 3 non-identical chains (alpha, beta and gamma). The 2 heterotrimers are in head to head conformation with the N-termini in a small central domain. In terms of processing, conversion of fibrinogen to fibrin is triggered by thrombin, which cleaves fibrinopeptides A and B from alpha and beta chains, and thus exposes the N-terminal polymerization sites responsible for the formation of the soft clot.

It is found in the secreted. In terms of biological role, cleaved by the protease thrombin to yield monomers which, together with fibrinogen alpha (FGA) and fibrinogen gamma (FGG), polymerize to form an insoluble fibrin matrix. Fibrin has a major function in hemostasis as one of the primary components of blood clots. In addition, functions during the early stages of wound repair to stabilize the lesion and guide cell migration during re-epithelialization. Was originally thought to be essential for platelet aggregation, based on in vitro studies using anticoagulated blood. However subsequent studies have shown that it is not absolutely required for thrombus formation in vivo. Enhances expression of SELP in activated platelets. Maternal fibrinogen is essential for successful pregnancy. Fibrin deposition is also associated with infection, where it protects against IFNG-mediated hemorrhage. May also facilitate the antibacterial immune response via both innate and T-cell mediated pathways. In Cervus elaphus (Red deer), this protein is Fibrinogen beta chain (FGB).